Reading from the N-terminus, the 91-residue chain is uncharacterized protein (91 aa).

It localises to the plastid. The protein resides in the cyanelle. This is an uncharacterized protein from Cyanophora paradoxa.